A 194-amino-acid chain; its full sequence is Crossover junction endodeoxyribonuclease RuvC (194 aa).

Active-site residues include Asp8, Glu72, and Asp144. Asp8, Glu72, and Asp144 together coordinate Mg(2+).

This sequence belongs to the RuvC family. In terms of assembly, homodimer which binds Holliday junction (HJ) DNA. The HJ becomes 2-fold symmetrical on binding to RuvC with unstacked arms; it has a different conformation from HJ DNA in complex with RuvA. In the full resolvosome a probable DNA-RuvA(4)-RuvB(12)-RuvC(2) complex forms which resolves the HJ. Mg(2+) serves as cofactor.

The protein resides in the cytoplasm. The catalysed reaction is Endonucleolytic cleavage at a junction such as a reciprocal single-stranded crossover between two homologous DNA duplexes (Holliday junction).. In terms of biological role, the RuvA-RuvB-RuvC complex processes Holliday junction (HJ) DNA during genetic recombination and DNA repair. Endonuclease that resolves HJ intermediates. Cleaves cruciform DNA by making single-stranded nicks across the HJ at symmetrical positions within the homologous arms, yielding a 5'-phosphate and a 3'-hydroxyl group; requires a central core of homology in the junction. The consensus cleavage sequence is 5'-(A/T)TT(C/G)-3'. Cleavage occurs on the 3'-side of the TT dinucleotide at the point of strand exchange. HJ branch migration catalyzed by RuvA-RuvB allows RuvC to scan DNA until it finds its consensus sequence, where it cleaves and resolves the cruciform DNA. The sequence is that of Crossover junction endodeoxyribonuclease RuvC from Psychrobacter cryohalolentis (strain ATCC BAA-1226 / DSM 17306 / VKM B-2378 / K5).